The primary structure comprises 723 residues: Homeobox protein vnd (723 aa).

Disordered stretches follow at residues 1–115 (MTTS…GLAP), 224–307 (AHHG…HHHP), 465–549 (GSSG…RKRR), and 703–723 (HAHA…AWWP). Over residues 10–22 (TPSKRDRDRERDN) the composition is skewed to basic and acidic residues. A compositionally biased stretch (low complexity) spans 23 to 36 (SSGLGSAGSLPASP). A compositionally biased stretch (polar residues) spans 37–48 (QSAITVSPSSPA). Over residues 61–92 (LERKREREDREDREDRKERQERHERDRDHERF) the composition is skewed to basic and acidic residues. Residues 97–111 (STASTTVPTNTSSSS) show a composition bias toward low complexity. A compositionally biased stretch (basic and acidic residues) spans 226-235 (HGSDLSHHSA). A compositionally biased stretch (polar residues) spans 237-255 (ESTSGHRGQGSHTSPSALS). The segment covering 278 to 289 (EADHHSTTEHHA) has biased composition (basic and acidic residues). Basic residues predominate over residues 298–307 (HPHHQQHHHP). The segment covering 483-493 (NNNNNTTNNNN) has biased composition (low complexity). A compositionally biased stretch (acidic residues) spans 512 to 528 (LNEDGIEEDIDDVDDAD). Residues 545-604 (KRKRRVLFTKAQTYELERRFRQQRYLSAPEREHLASLIRLTPTQVKIWFQNHRYKTKRAQ) constitute a DNA-binding region (homeobox). The span at 703–716 (HAHAHGHGHPHAHA) shows a compositional bias: basic residues.

The protein belongs to the NK-2 homeobox family. Expressed in the CNS and midgut.

The protein resides in the nucleus. Its function is as follows. Probable transcriptional regulator involved in the regulation of the proneural AS-C genes and the neurogenic genes of the enhancer of split complex. Could specifically activate proneural genes in the ventral-most neuroectoderm. The protein is Homeobox protein vnd (vnd) of Drosophila melanogaster (Fruit fly).